A 156-amino-acid polypeptide reads, in one-letter code: Ribosomal RNA large subunit methyltransferase H (156 aa).

S-adenosyl-L-methionine contacts are provided by residues Leu-73, Gly-104, and 123 to 128 (LSPLTL).

This sequence belongs to the RNA methyltransferase RlmH family. Homodimer.

The protein resides in the cytoplasm. The catalysed reaction is pseudouridine(1915) in 23S rRNA + S-adenosyl-L-methionine = N(3)-methylpseudouridine(1915) in 23S rRNA + S-adenosyl-L-homocysteine + H(+). Its function is as follows. Specifically methylates the pseudouridine at position 1915 (m3Psi1915) in 23S rRNA. The chain is Ribosomal RNA large subunit methyltransferase H from Edwardsiella ictaluri (strain 93-146).